Consider the following 915-residue polypeptide: Alanine--tRNA ligase (915 aa).

The Zn(2+) site is built by histidine 609, histidine 613, cysteine 712, and histidine 716.

Belongs to the class-II aminoacyl-tRNA synthetase family. Requires Zn(2+) as cofactor.

The protein localises to the cytoplasm. It carries out the reaction tRNA(Ala) + L-alanine + ATP = L-alanyl-tRNA(Ala) + AMP + diphosphate. Catalyzes the attachment of alanine to tRNA(Ala) in a two-step reaction: alanine is first activated by ATP to form Ala-AMP and then transferred to the acceptor end of tRNA(Ala). Also edits incorrectly charged Ser-tRNA(Ala) and Gly-tRNA(Ala) via its editing domain. In Methanoculleus marisnigri (strain ATCC 35101 / DSM 1498 / JR1), this protein is Alanine--tRNA ligase.